Reading from the N-terminus, the 79-residue chain is ATP synthase subunit c (79 aa).

A run of 2 helical transmembrane segments spans residues isoleucine 11 to leucine 31 and phenylalanine 53 to tyrosine 73.

Belongs to the ATPase C chain family. F-type ATPases have 2 components, F(1) - the catalytic core - and F(0) - the membrane proton channel. F(1) has five subunits: alpha(3), beta(3), gamma(1), delta(1), epsilon(1). F(0) has three main subunits: a(1), b(2) and c(10-14). The alpha and beta chains form an alternating ring which encloses part of the gamma chain. F(1) is attached to F(0) by a central stalk formed by the gamma and epsilon chains, while a peripheral stalk is formed by the delta and b chains.

It localises to the cell membrane. In terms of biological role, f(1)F(0) ATP synthase produces ATP from ADP in the presence of a proton or sodium gradient. F-type ATPases consist of two structural domains, F(1) containing the extramembraneous catalytic core and F(0) containing the membrane proton channel, linked together by a central stalk and a peripheral stalk. During catalysis, ATP synthesis in the catalytic domain of F(1) is coupled via a rotary mechanism of the central stalk subunits to proton translocation. Key component of the F(0) channel; it plays a direct role in translocation across the membrane. A homomeric c-ring of between 10-14 subunits forms the central stalk rotor element with the F(1) delta and epsilon subunits. The protein is ATP synthase subunit c of Buchnera aphidicola subsp. Acyrthosiphon pisum (strain 5A).